The primary structure comprises 156 residues: Transcription elongation factor GreA (156 aa).

Positions 1–32 (MKKVRLTREGYEKLKKELEDLKRKFMYEISER) form a coiled coil.

This sequence belongs to the GreA/GreB family.

Its function is as follows. Necessary for efficient RNA polymerase transcription elongation past template-encoded arresting sites. The arresting sites in DNA have the property of trapping a certain fraction of elongating RNA polymerases that pass through, resulting in locked ternary complexes. Cleavage of the nascent transcript by cleavage factors such as GreA or GreB allows the resumption of elongation from the new 3'terminus. GreA releases sequences of 2 to 3 nucleotides. In Thermotoga petrophila (strain ATCC BAA-488 / DSM 13995 / JCM 10881 / RKU-1), this protein is Transcription elongation factor GreA.